Reading from the N-terminus, the 196-residue chain is DNA replication complex GINS protein PSF1 (196 aa).

This sequence belongs to the GINS1/PSF1 family. Component of the GINS complex which is a heterotetramer of GINS1, GINS2, GINS3 and GINS4. Forms a stable subcomplex with GINS4. GINS complex interacts with DNA primase in vitro. Component of the CMG helicase complex, a hexameric ring of related MCM2-7 subunits stabilized by CDC45 and the tetrameric GINS complex.

The protein localises to the nucleus. The protein resides in the chromosome. Functionally, required for correct functioning of the GINS complex, a complex that plays an essential role in the initiation of DNA replication, and progression of DNA replication forks. GINS complex is a core component of CDC45-MCM-GINS (CMG) helicase, the molecular machine that unwinds template DNA during replication, and around which the replisome is built. This chain is DNA replication complex GINS protein PSF1 (GINS1), found in Bos taurus (Bovine).